A 71-amino-acid chain; its full sequence is UPF0434 protein Meso_3270 (71 aa).

The protein belongs to the UPF0434 family.

The sequence is that of UPF0434 protein Meso_3270 from Chelativorans sp. (strain BNC1).